An 896-amino-acid chain; its full sequence is Phosphatidate phosphatase LPIN2 (896 aa).

An N-LIP region spans residues 1 to 108; it reads MNYVGQLAGQ…LPAYLATSPI (108 aa). Ser106 bears the Phosphoserine mark. Residues 120-208 form a disordered region; it reads TPLVKSGGDE…SSNASLKEEE (89 aa). Basic residues predominate over residues 152 to 162; sequence VKKKKRRRKKY. The short motif at 153 to 158 is the Nuclear localization signal element; the sequence is KKKKRR. Phosphoserine is present on residues Ser174, Ser186, Ser187, Ser243, and Ser303. Disordered regions lie at residues 370-405 and 420-459; these read AEAP…DIYL and FPKS…TECL. Over residues 387–396 the composition is skewed to basic residues; it reads KKKGVHKRSQ. Residues 426 to 448 are compositionally biased toward polar residues; it reads EPGSRQWPESDTLSGSQSPQSVG. Ser566 is modified (phosphoserine). A compositionally biased stretch (basic and acidic residues) spans 569–579; the sequence is KQLPESKEGKS. A disordered region spans residues 569-636; sequence KQLPESKEGK…LSHGSTTSYK (68 aa). Residues 604–617 show a composition bias toward acidic residues; that stretch reads SSSDEGSQELEESI. The segment at 635–837 is C-LIP; it reads YKKSLRLSSD…RIFTVNPKGE (203 aa). Positions 689-693 match the DXDXT motif motif; the sequence is DIDGT. Positions 700–704 match the LXXIL motif motif; the sequence is LGQIL.

Belongs to the lipin family. Mg(2+) is required as a cofactor. As to expression, expressed in liver, lung, kidney, placenta, spleen, thymus, lymph node, prostate, testes, small intestine, and colon.

The protein localises to the nucleus. It localises to the cytoplasm. Its subcellular location is the cytosol. The protein resides in the endoplasmic reticulum membrane. It catalyses the reaction a 1,2-diacyl-sn-glycero-3-phosphate + H2O = a 1,2-diacyl-sn-glycerol + phosphate. Inhibited by N-ethylmaleimide. In terms of biological role, acts as a magnesium-dependent phosphatidate phosphatase enzyme which catalyzes the conversion of phosphatidic acid to diacylglycerol during triglyceride, phosphatidylcholine and phosphatidylethanolamine biosynthesis in the endoplasmic reticulum membrane. Plays important roles in controlling the metabolism of fatty acids at different levels. Also acts as a nuclear transcriptional coactivator for PPARGC1A to modulate lipid metabolism. This Homo sapiens (Human) protein is Phosphatidate phosphatase LPIN2.